The following is a 141-amino-acid chain: Large ribosomal subunit protein uL11 (141 aa).

The protein belongs to the universal ribosomal protein uL11 family. Part of the ribosomal stalk of the 50S ribosomal subunit. Interacts with L10 and the large rRNA to form the base of the stalk. L10 forms an elongated spine to which L12 dimers bind in a sequential fashion forming a multimeric L10(L12)X complex. One or more lysine residues are methylated.

Its function is as follows. Forms part of the ribosomal stalk which helps the ribosome interact with GTP-bound translation factors. The chain is Large ribosomal subunit protein uL11 from Methylacidiphilum infernorum (isolate V4) (Methylokorus infernorum (strain V4)).